We begin with the raw amino-acid sequence, 563 residues long: Arginine--tRNA ligase (563 aa).

The short motif at 108–118 (PNVAKEMHVGH) is the 'HIGH' region element.

It belongs to the class-I aminoacyl-tRNA synthetase family. In terms of assembly, monomer.

The protein localises to the cytoplasm. It carries out the reaction tRNA(Arg) + L-arginine + ATP = L-arginyl-tRNA(Arg) + AMP + diphosphate. The protein is Arginine--tRNA ligase (argS) of Pasteurella multocida (strain Pm70).